Here is a 133-residue protein sequence, read N- to C-terminus: Small ribosomal subunit protein uS11 (133 aa).

It belongs to the universal ribosomal protein uS11 family. In terms of assembly, part of the 30S ribosomal subunit. Interacts with proteins S7 and S18. Binds to IF-3.

In terms of biological role, located on the platform of the 30S subunit, it bridges several disparate RNA helices of the 16S rRNA. Forms part of the Shine-Dalgarno cleft in the 70S ribosome. The sequence is that of Small ribosomal subunit protein uS11 from Ralstonia pickettii (strain 12J).